Consider the following 869-residue polypeptide: Alanine--tRNA ligase (869 aa).

Residues histidine 559, histidine 563, cysteine 660, and histidine 664 each contribute to the Zn(2+) site.

It belongs to the class-II aminoacyl-tRNA synthetase family. It depends on Zn(2+) as a cofactor.

It is found in the cytoplasm. It catalyses the reaction tRNA(Ala) + L-alanine + ATP = L-alanyl-tRNA(Ala) + AMP + diphosphate. Catalyzes the attachment of alanine to tRNA(Ala) in a two-step reaction: alanine is first activated by ATP to form Ala-AMP and then transferred to the acceptor end of tRNA(Ala). Also edits incorrectly charged Ser-tRNA(Ala) and Gly-tRNA(Ala) via its editing domain. This Janthinobacterium sp. (strain Marseille) (Minibacterium massiliensis) protein is Alanine--tRNA ligase.